The chain runs to 662 residues: Bifunctional polymyxin resistance protein ArnA (662 aa).

The interval 1 to 307 is formyltransferase ArnAFT; it reads MTSKAVVFAY…ELGLVEGARL (307 aa). His106 acts as the Proton donor; for formyltransferase activity in catalysis. Residues Arg116 and 138–142 each bind (6R)-10-formyltetrahydrofolate; that span reads VERAD. The interval 316–662 is dehydrogenase ArnADH; the sequence is RRTRVLILGV…EALREREAQA (347 aa). NAD(+)-binding positions include Asp349 and 370–371; that span reads DI. UDP-alpha-D-glucuronate-binding positions include Ala395, Tyr400, and 434–435; that span reads TS. Glu436 (proton acceptor; for decarboxylase activity) is an active-site residue. UDP-alpha-D-glucuronate contacts are provided by residues Arg462, Asn493, 527–536, and Tyr614; that span reads RLVDGGAQKR. The Proton donor; for decarboxylase activity role is filled by Arg620.

This sequence in the N-terminal section; belongs to the Fmt family. UDP-L-Ara4N formyltransferase subfamily. It in the C-terminal section; belongs to the NAD(P)-dependent epimerase/dehydratase family. UDP-glucuronic acid decarboxylase subfamily. Homohexamer, formed by a dimer of trimers.

The catalysed reaction is UDP-alpha-D-glucuronate + NAD(+) = UDP-beta-L-threo-pentopyranos-4-ulose + CO2 + NADH. It catalyses the reaction UDP-4-amino-4-deoxy-beta-L-arabinose + (6R)-10-formyltetrahydrofolate = UDP-4-deoxy-4-formamido-beta-L-arabinose + (6S)-5,6,7,8-tetrahydrofolate + H(+). The protein operates within nucleotide-sugar biosynthesis; UDP-4-deoxy-4-formamido-beta-L-arabinose biosynthesis; UDP-4-deoxy-4-formamido-beta-L-arabinose from UDP-alpha-D-glucuronate: step 1/3. Its pathway is nucleotide-sugar biosynthesis; UDP-4-deoxy-4-formamido-beta-L-arabinose biosynthesis; UDP-4-deoxy-4-formamido-beta-L-arabinose from UDP-alpha-D-glucuronate: step 3/3. It functions in the pathway bacterial outer membrane biogenesis; lipopolysaccharide biosynthesis. Functionally, bifunctional enzyme that catalyzes the oxidative decarboxylation of UDP-glucuronic acid (UDP-GlcUA) to UDP-4-keto-arabinose (UDP-Ara4O) and the addition of a formyl group to UDP-4-amino-4-deoxy-L-arabinose (UDP-L-Ara4N) to form UDP-L-4-formamido-arabinose (UDP-L-Ara4FN). The modified arabinose is attached to lipid A and is required for resistance to polymyxin and cationic antimicrobial peptides. This is Bifunctional polymyxin resistance protein ArnA from Pseudomonas paraeruginosa (strain DSM 24068 / PA7) (Pseudomonas aeruginosa (strain PA7)).